The sequence spans 302 residues: 33 kDa chaperonin (302 aa).

2 disulfide bridges follow: Cys-255/Cys-257 and Cys-288/Cys-291.

It belongs to the HSP33 family. In terms of processing, under oxidizing conditions two disulfide bonds are formed involving the reactive cysteines. Under reducing conditions zinc is bound to the reactive cysteines and the protein is inactive.

The protein resides in the cytoplasm. Functionally, redox regulated molecular chaperone. Protects both thermally unfolding and oxidatively damaged proteins from irreversible aggregation. Plays an important role in the bacterial defense system toward oxidative stress. The sequence is that of 33 kDa chaperonin from Caulobacter vibrioides (strain ATCC 19089 / CIP 103742 / CB 15) (Caulobacter crescentus).